A 724-amino-acid chain; its full sequence is Probable serine/threonine-protein kinase KKQ8 (724 aa).

2 disordered regions span residues 1–81 (MVMQ…RQRS) and 93–188 (HPFR…KDIL). At Ser19 the chain carries Phosphoserine. Over residues 45 to 54 (PYRSSSTSPK) the composition is skewed to low complexity. The segment covering 95–106 (FRQTGSGASNSP) has biased composition (polar residues). Residues 143-162 (RSSSVSSCDSSNGTTSSSDS) show a composition bias toward low complexity. Phosphoserine is present on residues Ser232, Ser238, and Ser241. The tract at residues 329 to 355 (SQTNHEKRTGQSPNDSNRSSPTQGRED) is disordered. A compositionally biased stretch (polar residues) spans 338-351 (GQSPNDSNRSSPTQ). In terms of domain architecture, Protein kinase spans 412-712 (GHPVGLVGAG…VGKLLDMQWM (301 aa)). Residues 418-426 (VGAGAYGEV) and Lys455 contribute to the ATP site. Catalysis depends on Asp563, which acts as the Proton acceptor.

Belongs to the protein kinase superfamily. CAMK Ser/Thr protein kinase family. NPR/HAL subfamily. HAL5 sub-subfamily.

The protein localises to the cytoplasm. It carries out the reaction L-seryl-[protein] + ATP = O-phospho-L-seryl-[protein] + ADP + H(+). The catalysed reaction is L-threonyl-[protein] + ATP = O-phospho-L-threonyl-[protein] + ADP + H(+). The polypeptide is Probable serine/threonine-protein kinase KKQ8 (KKQ8) (Saccharomyces cerevisiae (strain ATCC 204508 / S288c) (Baker's yeast)).